Reading from the N-terminus, the 202-residue chain is LexA repressor (202 aa).

A DNA-binding region (H-T-H motif) is located at residues 28-48 (RAEIAQRLGFRSPNAAEEHLK). Catalysis depends on for autocatalytic cleavage activity residues serine 119 and lysine 156.

This sequence belongs to the peptidase S24 family. Homodimer.

The enzyme catalyses Hydrolysis of Ala-|-Gly bond in repressor LexA.. Represses a number of genes involved in the response to DNA damage (SOS response), including recA and lexA. Binds to the 16 bp palindromic sequence 5'-CTGTATATATATACAG-3'. In the presence of single-stranded DNA, RecA interacts with LexA causing an autocatalytic cleavage which disrupts the DNA-binding part of LexA, leading to derepression of the SOS regulon and eventually DNA repair. The sequence is that of LexA repressor from Salmonella agona (strain SL483).